Reading from the N-terminus, the 657-residue chain is tRNA 5-methylaminomethyl-2-thiouridine biosynthesis bifunctional protein MnmC (657 aa).

A tRNA (mnm(5)s(2)U34)-methyltransferase region spans residues 1-235 (MSDAHNAQLD…KREMLAGPFQ (235 aa)). The tract at residues 261–657 (IGAGLAGCAT…QLIRGTGSPT (397 aa)) is FAD-dependent cmnm(5)s(2)U34 oxidoreductase.

It in the N-terminal section; belongs to the methyltransferase superfamily. tRNA (mnm(5)s(2)U34)-methyltransferase family. This sequence in the C-terminal section; belongs to the DAO family. The cofactor is FAD.

The protein resides in the cytoplasm. The enzyme catalyses 5-aminomethyl-2-thiouridine(34) in tRNA + S-adenosyl-L-methionine = 5-methylaminomethyl-2-thiouridine(34) in tRNA + S-adenosyl-L-homocysteine + H(+). Functionally, catalyzes the last two steps in the biosynthesis of 5-methylaminomethyl-2-thiouridine (mnm(5)s(2)U) at the wobble position (U34) in tRNA. Catalyzes the FAD-dependent demodification of cmnm(5)s(2)U34 to nm(5)s(2)U34, followed by the transfer of a methyl group from S-adenosyl-L-methionine to nm(5)s(2)U34, to form mnm(5)s(2)U34. The protein is tRNA 5-methylaminomethyl-2-thiouridine biosynthesis bifunctional protein MnmC of Ectopseudomonas mendocina (strain ymp) (Pseudomonas mendocina).